A 243-amino-acid polypeptide reads, in one-letter code: Segregation and condensation protein A (243 aa).

This sequence belongs to the ScpA family. As to quaternary structure, component of a cohesin-like complex composed of ScpA, ScpB and the Smc homodimer, in which ScpA and ScpB bind to the head domain of Smc. The presence of the three proteins is required for the association of the complex with DNA.

Its subcellular location is the cytoplasm. Its function is as follows. Participates in chromosomal partition during cell division. May act via the formation of a condensin-like complex containing Smc and ScpB that pull DNA away from mid-cell into both cell halves. This chain is Segregation and condensation protein A, found in Staphylococcus aureus (strain NCTC 8325 / PS 47).